The primary structure comprises 305 residues: Protein FdhE homolog (305 aa).

It belongs to the FdhE family.

Its subcellular location is the cytoplasm. Necessary for formate dehydrogenase activity. In Haemophilus ducreyi (strain 35000HP / ATCC 700724), this protein is Protein FdhE homolog.